The following is a 202-amino-acid chain: uncharacterized protein (202 aa).

Residues 175–195 (INTGIALFIILTSLLVYFIQF) form a helical membrane-spanning segment.

The protein localises to the membrane. This is an uncharacterized protein from Dictyostelium discoideum (Social amoeba).